The following is a 336-amino-acid chain: Probable G-protein coupled receptor 160 (336 aa).

Residues 1–21 (MTALPSKNCSFQYQSHQAPRS) lie on the Extracellular side of the membrane. N-linked (GlcNAc...) asparagine glycosylation is present at asparagine 8. A helical transmembrane segment spans residues 22 to 42 (LDATCLLLLIILGKVLLNVLI). The Cytoplasmic portion of the chain corresponds to 43–56 (LRVKRKDTSWSFME). The helical transmembrane segment at 57–77 (YFCFSLALVDLLLLVNISVLT) threads the bilayer. Residues 78–95 (YFRDFVVLGIRFTNYHIC) are Extracellular-facing. Residues 96–116 (LLTQIVSFAYGFLHYPVCSLA) form a helical membrane-spanning segment. The Cytoplasmic portion of the chain corresponds to 117–136 (CIDYWCNLSRATKPSSRWQK). Residues 137–157 (LLYLLTVILTWISVLAYVLGD) traverse the membrane as a helical segment. At 158 to 187 (PAISASLKTHKTSVNQCPSYVSTQSHWLSL) the chain is on the extracellular side. Residues 188-208 (SMLMILSVAFLISWQEVVALI) traverse the membrane as a helical segment. Over 209 to 243 (QAIRIASYKNKAVLYFPFPPHTSYTVSPRAVLLPR) the chain is Cytoplasmic. A helical membrane pass occupies residues 244-264 (LIVCFLGTWFPFVALQVLILS). At 265–272 (LRVQIPAY) the chain is on the extracellular side. The helical transmembrane segment at 273 to 293 (IEMNVPWLYFVNSFLIAAVYW) threads the bilayer. The Cytoplasmic portion of the chain corresponds to 294–336 (FNCHKLYWRDGMFPVDPFINWKCCFVPVHRLKQVERPMSIIIC).

The protein belongs to the G-protein coupled receptor 1 family.

Its subcellular location is the cell membrane. Functionally, orphan receptor. The protein is Probable G-protein coupled receptor 160 (Gpr160) of Rattus norvegicus (Rat).